We begin with the raw amino-acid sequence, 66 residues long: Small ribosomal subunit protein eS30 (66 aa).

A disordered region spans residues 1-35; the sequence is MGKVHGGLNRAGKVRNATPKKDKEEKRKPKVGRAK.

It belongs to the eukaryotic ribosomal protein eS30 family.

The protein is Small ribosomal subunit protein eS30 (rps30-1) of Dictyostelium discoideum (Social amoeba).